Reading from the N-terminus, the 667-residue chain is Soluble guanylate cyclase 89Da (667 aa).

Heme is bound at residue H104. Positions 337 to 364 (AQEFSESHPVDDDESAREDEIDPATGER) are disordered. The segment covering 347–358 (DDDESAREDEID) has biased composition (acidic residues). The stretch at 427–455 (QHCSKLEIMFEKEEQRSDELEKSLELADS) forms a coiled coil. Residues 491 to 617 (SVIFLEVMNV…DTVNTASRME (127 aa)) enclose the Guanylate cyclase domain.

The protein belongs to the adenylyl cyclase class-4/guanylyl cyclase family. As to quaternary structure, heterodimer; with Gyc88E, in the presence of magnesium or manganese. It depends on heme as a cofactor.

The protein resides in the cytoplasm. It carries out the reaction GTP = 3',5'-cyclic GMP + diphosphate. With respect to regulation, probably not activated by nitric oxide (NO). Heterodimer also exhibits some stimulation, some compounds (SIN-1 and two of the NONOates) that were ineffective at stimulating Gyc-88E alone did stimulate the heterodimer. Its function is as follows. Heterodimers with Gyc-89Da and Gyc-89Db are activated in response to changing oxygen concentrations, alerting flies to hypoxic environments. Under normal oxygen concentrations, oxygen binds to the heme group and results in low levels of guanylyl cyclase activity. When exposed to reduced oxygen concentrations, the oxygen dissociates from the heme group resulting in activation of the enzyme. The polypeptide is Soluble guanylate cyclase 89Da (Drosophila melanogaster (Fruit fly)).